The sequence spans 325 residues: Tagatose 1,6-diphosphate aldolase 1 (325 aa).

Belongs to the aldolase LacD family.

The enzyme catalyses D-tagatofuranose 1,6-bisphosphate = D-glyceraldehyde 3-phosphate + dihydroxyacetone phosphate. Its pathway is carbohydrate metabolism; D-tagatose 6-phosphate degradation; D-glyceraldehyde 3-phosphate and glycerone phosphate from D-tagatose 6-phosphate: step 2/2. The polypeptide is Tagatose 1,6-diphosphate aldolase 1 (lacD1) (Streptococcus mutans serotype c (strain ATCC 700610 / UA159)).